A 496-amino-acid chain; its full sequence is ATP synthase subunit beta, chloroplastic (496 aa).

170-177 (GGAGVGKT) contacts ATP.

It belongs to the ATPase alpha/beta chains family. In terms of assembly, F-type ATPases have 2 components, CF(1) - the catalytic core - and CF(0) - the membrane proton channel. CF(1) has five subunits: alpha(3), beta(3), gamma(1), delta(1), epsilon(1). CF(0) has four main subunits: a(1), b(1), b'(1) and c(9-12).

It is found in the plastid. The protein localises to the chloroplast thylakoid membrane. The catalysed reaction is ATP + H2O + 4 H(+)(in) = ADP + phosphate + 5 H(+)(out). In terms of biological role, produces ATP from ADP in the presence of a proton gradient across the membrane. The catalytic sites are hosted primarily by the beta subunits. The chain is ATP synthase subunit beta, chloroplastic from Trachycarpus fortunei (Chinese windmill palm).